The chain runs to 159 residues: MNRVLYPGTFDPITKGHGDLVERASRLFDHVIIAVAASPKKNPLFPLEQRVELAREVTKHLPNVEVVGFSTLLAHFAKEQNANVFLRGLRAVSDFEYEFQLANMNRQLAPDVESLFLTPSERYSFISSTLVREIAALGGDITKFVHPAVADALTLRFKK.

Threonine 9 provides a ligand contact to substrate. Residues 9–10 and histidine 17 each bind ATP; that span reads TF. Substrate is bound by residues lysine 41, leucine 73, and arginine 87. ATP contacts are provided by residues 88-90, glutamate 98, and 123-129; these read GLR and YSFISST.

The protein belongs to the bacterial CoaD family. Homohexamer. Mg(2+) is required as a cofactor.

Its subcellular location is the cytoplasm. It carries out the reaction (R)-4'-phosphopantetheine + ATP + H(+) = 3'-dephospho-CoA + diphosphate. It participates in cofactor biosynthesis; coenzyme A biosynthesis; CoA from (R)-pantothenate: step 4/5. In terms of biological role, reversibly transfers an adenylyl group from ATP to 4'-phosphopantetheine, yielding dephospho-CoA (dPCoA) and pyrophosphate. The sequence is that of Phosphopantetheine adenylyltransferase from Pseudomonas fluorescens (strain ATCC BAA-477 / NRRL B-23932 / Pf-5).